A 319-amino-acid polypeptide reads, in one-letter code: Malate dehydrogenase (319 aa).

NAD(+)-binding positions include 10–15 and D34; that span reads GAGNIG. Substrate contacts are provided by R83 and R89. Residues N96 and 119 to 121 contribute to the NAD(+) site; that span reads ITN. Positions 121 and 152 each coordinate substrate. H176 (proton acceptor) is an active-site residue.

The protein belongs to the LDH/MDH superfamily. MDH type 3 family.

The enzyme catalyses (S)-malate + NAD(+) = oxaloacetate + NADH + H(+). Functionally, catalyzes the reversible oxidation of malate to oxaloacetate. The protein is Malate dehydrogenase of Francisella novicida.